The sequence spans 89 residues: UPF0237 protein lin0537 (89 aa).

The region spanning 4-78 (VLTVIGKDNV…EELQVKIHIQ (75 aa)) is the ACT domain.

Belongs to the UPF0237 family.

The polypeptide is UPF0237 protein lin0537 (Listeria innocua serovar 6a (strain ATCC BAA-680 / CLIP 11262)).